The primary structure comprises 247 residues: Caffeoyl-CoA O-methyltransferase 2 (247 aa).

Lys21 serves as a coordination point for substrate. S-adenosyl-L-methionine contacts are provided by residues Thr63, Glu85, 87–88 (GV), Ser93, Asp111, and Ala140. Position 163 (Asp163) interacts with substrate. Asp163 serves as a coordination point for a divalent metal cation. Asp165 provides a ligand contact to S-adenosyl-L-methionine. Residues Asp189 and Asn190 each contribute to the a divalent metal cation site. A substrate-binding site is contributed by Asn194.

The protein belongs to the class I-like SAM-binding methyltransferase superfamily. Cation-dependent O-methyltransferase family. CCoAMT subfamily. A divalent metal cation serves as cofactor.

It carries out the reaction (E)-caffeoyl-CoA + S-adenosyl-L-methionine = (E)-feruloyl-CoA + S-adenosyl-L-homocysteine + H(+). The protein operates within aromatic compound metabolism; phenylpropanoid biosynthesis. Methylates caffeoyl-CoA to feruloyl-CoA and 5-hydroxyferuloyl-CoA to sinapoyl-CoA. Plays a role in the synthesis of feruloylated polysaccharides. Involved in the reinforcement of the plant cell wall. Also involved in the responding to wounding or pathogen challenge by the increased formation of cell wall-bound ferulic acid polymers. This is Caffeoyl-CoA O-methyltransferase 2 (CCOAOMT2) from Eucalyptus globulus (Tasmanian blue gum).